Here is a 293-residue protein sequence, read N- to C-terminus: AKT-interacting protein (293 aa).

Polar residues predominate over residues 1 to 11 (MNPFWSMSTSS). Residues 1 to 63 (MNPFWSMSTS…TSPAPAAQST (63 aa)) form a disordered region. A compositionally biased stretch (basic and acidic residues) spans 14–23 (KRSEGEEKTL). At serine 30 the chain carries Phosphoserine. The 149-residue stretch at 74 to 222 (YLEYSLLAEF…VVDSVQVCTA (149 aa)) folds into the UBC core domain. Positions 253-265 (MLTQKKKPEEQHN) are enriched in basic and acidic residues. The tract at residues 253 to 293 (MLTQKKKPEEQHNKSVHVAGLSWVKPGSVQPFSKEEKTVAT) is disordered.

It belongs to the ubiquitin-conjugating enzyme family. FTS subfamily. In terms of assembly, component of the FTS/Hook/FHIP complex (FHF complex), composed of AKTIP/FTS, FHIP1B, and one or more members of the Hook family of proteins HOOK1, HOOK2, and HOOK3. Interacts directly with HOOK1, HOOK2 and HOOK3. The FHF complex associates with the homotypic vesicular sorting complex (the HOPS complex). Also interacts with AKT1. May interact with FHIP1A.

Its subcellular location is the cytoplasm. The protein localises to the cell membrane. In terms of biological role, component of the FTS/Hook/FHIP complex (FHF complex). The FHF complex may function to promote vesicle trafficking and/or fusion via the homotypic vesicular protein sorting complex (the HOPS complex). Regulates apoptosis by enhancing phosphorylation and activation of AKT1. Increases release of TNFSF6 via the AKT1/GSK3B/NFATC1 signaling cascade. FHF complex promotes the distribution of AP-4 complex to the perinuclear area of the cell. The sequence is that of AKT-interacting protein (AKTIP) from Pongo abelii (Sumatran orangutan).